We begin with the raw amino-acid sequence, 477 residues long: ACT domain-containing protein ACR1 (477 aa).

ACT domains follow at residues 38 to 124, 134 to 214, 283 to 358, and 361 to 441; these read LIKV…REVQ, AFEI…GDVS, MVNV…RASQ, and KLEI…MMPR. The Bipartite nuclear localization signal motif lies at 329–345; the sequence is KKNGGTLETEGQRERLR.

In terms of tissue distribution, expressed in flowers and siliques.

Its subcellular location is the nucleus. May bind amino acids. This chain is ACT domain-containing protein ACR1, found in Arabidopsis thaliana (Mouse-ear cress).